The primary structure comprises 188 residues: dCTP deaminase, dUMP-forming (188 aa).

DCTP contacts are provided by residues Lys101–Arg106, Asp119, Thr127–Glu129, Gln148, Tyr162, and Gln174. Catalysis depends on Glu129, which acts as the Proton donor/acceptor.

It belongs to the dCTP deaminase family. As to quaternary structure, homotrimer.

The enzyme catalyses dCTP + 2 H2O = dUMP + NH4(+) + diphosphate. Its pathway is pyrimidine metabolism; dUMP biosynthesis; dUMP from dCTP: step 1/1. Its function is as follows. Bifunctional enzyme that catalyzes both the deamination of dCTP to dUTP and the hydrolysis of dUTP to dUMP without releasing the toxic dUTP intermediate. The protein is dCTP deaminase, dUMP-forming of Corynebacterium jeikeium (strain K411).